Here is a 191-residue protein sequence, read N- to C-terminus: NADH-quinone oxidoreductase subunit B (191 aa).

[4Fe-4S] cluster is bound by residues cysteine 52, cysteine 53, cysteine 118, and cysteine 148.

This sequence belongs to the complex I 20 kDa subunit family. As to quaternary structure, NDH-1 is composed of 14 different subunits. Subunits NuoB, C, D, E, F, and G constitute the peripheral sector of the complex. [4Fe-4S] cluster is required as a cofactor.

The protein localises to the cell inner membrane. The catalysed reaction is a quinone + NADH + 5 H(+)(in) = a quinol + NAD(+) + 4 H(+)(out). Its function is as follows. NDH-1 shuttles electrons from NADH, via FMN and iron-sulfur (Fe-S) centers, to quinones in the respiratory chain. The immediate electron acceptor for the enzyme in this species is believed to be a menaquinone. Couples the redox reaction to proton translocation (for every two electrons transferred, four hydrogen ions are translocated across the cytoplasmic membrane), and thus conserves the redox energy in a proton gradient. The protein is NADH-quinone oxidoreductase subunit B of Azobacteroides pseudotrichonymphae genomovar. CFP2.